The following is a 146-amino-acid chain: Ecotin-like protein 1 (146 aa).

This sequence belongs to the protease inhibitor I11 (ecotin) family.

The protein is Ecotin-like protein 1 (ISP1) of Leishmania major.